Here is a 55-residue protein sequence, read N- to C-terminus: Ferredoxin (55 aa).

4Fe-4S ferredoxin-type domains follow at residues 2-27 and 28-55; these read FVINDSCVSCGACAGECPVSAITQGD and TQFVIDADTCIDCGNCANVCPVGAPNQE. [4Fe-4S] cluster contacts are provided by Cys8, Cys11, Cys14, Cys18, Cys37, Cys40, Cys43, and Cys47.

[4Fe-4S] cluster is required as a cofactor.

Its function is as follows. Ferredoxins are iron-sulfur proteins that transfer electrons in a wide variety of metabolic reactions. The sequence is that of Ferredoxin from Clostridium butyricum.